A 247-amino-acid chain; its full sequence is Protein GrpE (247 aa).

A compositionally biased stretch (basic and acidic residues) spans 31–49; sequence QKEETKTTNKDNQKEDETV. The segment at 31–79 is disordered; the sequence is QKEETKTTNKDNQKEDETVKNQSNQSNQSNQTKQTNTKQQKHQPKENSH. Low complexity predominate over residues 50 to 68; that stretch reads KNQSNQSNQSNQTKQTNTK.

This sequence belongs to the GrpE family. As to quaternary structure, homodimer.

The protein resides in the cytoplasm. Functionally, participates actively in the response to hyperosmotic and heat shock by preventing the aggregation of stress-denatured proteins, in association with DnaK and GrpE. It is the nucleotide exchange factor for DnaK and may function as a thermosensor. Unfolded proteins bind initially to DnaJ; upon interaction with the DnaJ-bound protein, DnaK hydrolyzes its bound ATP, resulting in the formation of a stable complex. GrpE releases ADP from DnaK; ATP binding to DnaK triggers the release of the substrate protein, thus completing the reaction cycle. Several rounds of ATP-dependent interactions between DnaJ, DnaK and GrpE are required for fully efficient folding. This is Protein GrpE from Onion yellows phytoplasma (strain OY-M).